The following is a 378-amino-acid chain: Chaperone protein DnaJ 1 (378 aa).

Residues aspartate 4 to glycine 68 form the J domain. The CR-type zinc finger occupies glycine 129 to arginine 211. The Zn(2+) site is built by cysteine 142, cysteine 145, cysteine 159, cysteine 162, cysteine 185, cysteine 188, cysteine 199, and cysteine 202. CXXCXGXG motif repeat units lie at residues cysteine 142–glycine 149, cysteine 159–glycine 166, cysteine 185–glycine 192, and cysteine 199–glycine 206.

This sequence belongs to the DnaJ family. Homodimer. It depends on Zn(2+) as a cofactor.

The protein resides in the cytoplasm. Functionally, participates actively in the response to hyperosmotic and heat shock by preventing the aggregation of stress-denatured proteins and by disaggregating proteins, also in an autonomous, DnaK-independent fashion. Unfolded proteins bind initially to DnaJ; upon interaction with the DnaJ-bound protein, DnaK hydrolyzes its bound ATP, resulting in the formation of a stable complex. GrpE releases ADP from DnaK; ATP binding to DnaK triggers the release of the substrate protein, thus completing the reaction cycle. Several rounds of ATP-dependent interactions between DnaJ, DnaK and GrpE are required for fully efficient folding. Also involved, together with DnaK and GrpE, in the DNA replication of plasmids through activation of initiation proteins. The protein is Chaperone protein DnaJ 1 of Corynebacterium efficiens (strain DSM 44549 / YS-314 / AJ 12310 / JCM 11189 / NBRC 100395).